The following is a 349-amino-acid chain: Protein Wnt-7a (349 aa).

Residues 1–31 (MNRKARRCLGHLFLSLGMVYLRIGGFSTVVA) form the signal peptide. 5 disulfides stabilise this stretch: C73–C84, C123–C131, C133–C152, C200–C214, and C202–C209. Residues N83 and N127 are each glycosylated (N-linked (GlcNAc...) asparagine). Residue S206 is the site of O-palmitoleoyl serine; by PORCN attachment. Residues 238–266 (VEPVRASRNKRPTFLKIKKPLSYRKPMDT) form a disordered linker region. Intrachain disulfides connect C278–C309, C294–C304, C308–C348, C324–C339, C326–C336, and C331–C332. A glycan (N-linked (GlcNAc...) asparagine) is linked at N295.

This sequence belongs to the Wnt family. As to quaternary structure, forms a soluble 1:1 complex with AFM; this prevents oligomerization and is required for prolonged biological activity. The complex with AFM may represent the physiological form in body fluids. Interacts with PORCN. Interacts (via intrinsically disordered linker region) with RECK; interaction with RECK confers ligand selectivity for Wnt7 in brain endothelial cells and allows these cells to selectively respond to Wnt7. Interacts with FZD5. In terms of processing, palmitoleoylation is required for efficient binding to frizzled receptors. Depalmitoleoylation leads to Wnt signaling pathway inhibition.

Its subcellular location is the secreted. The protein resides in the extracellular space. It localises to the extracellular matrix. Ligand for members of the frizzled family of seven transmembrane receptors that functions in the canonical Wnt/beta-catenin signaling pathway. Plays an important role in embryonic development, including dorsal versus ventral patterning during limb development, skeleton development and urogenital tract development. Required for central nervous system (CNS) angiogenesis and blood-brain barrier regulation. Required for normal, sexually dimorphic development of the Mullerian ducts, and for normal fertility in both sexes. Required for normal neural stem cell proliferation in the hippocampus dentate gyrus. Required for normal progress through the cell cycle in neural progenitor cells, for self-renewal of neural stem cells, and for normal neuronal differentiation and maturation. Promotes formation of synapses via its interaction with FZD5. In Chlorocebus aethiops (Green monkey), this protein is Protein Wnt-7a (WNT7A).